We begin with the raw amino-acid sequence, 256 residues long: tRNA-cytidine(32) 2-sulfurtransferase (256 aa).

Positions 35–40 (SGGKDS) match the PP-loop motif motif. The [4Fe-4S] cluster site is built by Cys110, Cys113, and Cys201.

Belongs to the TtcA family. Homodimer. It depends on Mg(2+) as a cofactor. Requires [4Fe-4S] cluster as cofactor.

It localises to the cytoplasm. The catalysed reaction is cytidine(32) in tRNA + S-sulfanyl-L-cysteinyl-[cysteine desulfurase] + AH2 + ATP = 2-thiocytidine(32) in tRNA + L-cysteinyl-[cysteine desulfurase] + A + AMP + diphosphate + H(+). Its pathway is tRNA modification. Its function is as follows. Catalyzes the ATP-dependent 2-thiolation of cytidine in position 32 of tRNA, to form 2-thiocytidine (s(2)C32). The sulfur atoms are provided by the cysteine/cysteine desulfurase (IscS) system. In Coxiella burnetii (strain CbuG_Q212) (Coxiella burnetii (strain Q212)), this protein is tRNA-cytidine(32) 2-sulfurtransferase.